A 559-amino-acid chain; its full sequence is Acetylcholinesterase-1 (559 aa).

Residues 1-21 (MMLPRCFVTVLLMSSVLYIGG) form the signal peptide. A disulfide bond links cysteine 92 and cysteine 114. Position 142 to 143 (142 to 143 (GG)) interacts with substrate. Serine 223 functions as the Acyl-ester intermediate in the catalytic mechanism. Serine 223 carries the post-translational modification Phosphoserine. Cysteine 276 and cysteine 293 form a disulfide bridge. Residues asparagine 278 and asparagine 342 are each glycosylated (N-linked (GlcNAc...) asparagine). Glutamate 354 serves as the catalytic Charge relay system. N-linked (GlcNAc...) asparagine glycosylation occurs at asparagine 374. Cysteine 432 and cysteine 550 are disulfide-bonded. The active-site Charge relay system is the histidine 471.

Belongs to the type-B carboxylesterase/lipase family. Expressed by the venom gland.

The protein resides in the secreted. It carries out the reaction acetylcholine + H2O = choline + acetate + H(+). Its function is as follows. Terminates signal transduction at the neuromuscular junction by rapid hydrolysis of the acetylcholine released into the synaptic cleft. This is Acetylcholinesterase-1 from Trittame loki (Brush-footed trapdoor spider).